Consider the following 64-residue polypeptide: Large ribosomal subunit protein bL33 (64 aa).

Belongs to the bacterial ribosomal protein bL33 family.

The protein is Large ribosomal subunit protein bL33 of Thermosynechococcus vestitus (strain NIES-2133 / IAM M-273 / BP-1).